Consider the following 32-residue polypeptide: Potassium channel toxin alpha-KTx 10.2 (32 aa).

Disulfide bonds link Cys-3–Cys-22, Cys-8–Cys-12, and Cys-27–Cys-29. Tyr-32 bears the Tyrosine amide mark.

The protein belongs to the short scorpion toxin superfamily. Potassium channel inhibitor family. Alpha-KTx 10 subfamily. Expressed by the venom gland.

It is found in the secreted. In terms of biological role, blocks Shaker B potassium-channels (Kv1.1/KCNA1 sub-family). The sequence is that of Potassium channel toxin alpha-KTx 10.2 from Centruroides noxius (Mexican scorpion).